Here is a 130-residue protein sequence, read N- to C-terminus: MAAESTKDMSVDLVAVERRLWSGQATFVSAQTTEGQIGIMPGHEPLLGQLVEGGIVNIVPVEGERIVAAVHGGFFSVTAGTVRILAESAEFAGEVDVDEARKVLADSAASDEELRVAQGRVRAVEQVASA.

It belongs to the ATPase epsilon chain family. F-type ATPases have 2 components, CF(1) - the catalytic core - and CF(0) - the membrane proton channel. CF(1) has five subunits: alpha(3), beta(3), gamma(1), delta(1), epsilon(1). CF(0) has three main subunits: a, b and c.

The protein resides in the cell membrane. Functionally, produces ATP from ADP in the presence of a proton gradient across the membrane. The chain is ATP synthase epsilon chain from Nocardia farcinica (strain IFM 10152).